The sequence spans 220 residues: uncharacterized protein (220 aa).

This is an uncharacterized protein from Borreliella burgdorferi (strain ATCC 35210 / DSM 4680 / CIP 102532 / B31) (Borrelia burgdorferi).